A 273-amino-acid chain; its full sequence is Shikimate dehydrogenase (NADP(+)) (273 aa).

Residues 14–16 and Thr-61 contribute to the shikimate site; that span reads SKS. Residue Lys-65 is the Proton acceptor of the active site. Positions 86 and 102 each coordinate shikimate. NADP(+) contacts are provided by residues 126-130, 150-155, and Met-213; these read GAGGA and NRTVAK. Tyr-215 is a binding site for shikimate. Residue Gly-237 coordinates NADP(+).

Belongs to the shikimate dehydrogenase family. In terms of assembly, homodimer.

It catalyses the reaction shikimate + NADP(+) = 3-dehydroshikimate + NADPH + H(+). The protein operates within metabolic intermediate biosynthesis; chorismate biosynthesis; chorismate from D-erythrose 4-phosphate and phosphoenolpyruvate: step 4/7. Involved in the biosynthesis of the chorismate, which leads to the biosynthesis of aromatic amino acids. Catalyzes the reversible NADPH linked reduction of 3-dehydroshikimate (DHSA) to yield shikimate (SA). The chain is Shikimate dehydrogenase (NADP(+)) from Tolumonas auensis (strain DSM 9187 / NBRC 110442 / TA 4).